A 264-amino-acid polypeptide reads, in one-letter code: Thymidylate synthase (264 aa).

DUMP is bound at residue Arg21. His51 lines the (6R)-5,10-methylene-5,6,7,8-tetrahydrofolate pocket. Residue 126–127 participates in dUMP binding; that stretch reads RR. Residue Cys146 is the Nucleophile of the active site. Residues 166 to 169, Asn177, and 207 to 209 contribute to the dUMP site; these read RSCD and HLY. Asp169 contacts (6R)-5,10-methylene-5,6,7,8-tetrahydrofolate. Residue Ala263 coordinates (6R)-5,10-methylene-5,6,7,8-tetrahydrofolate.

This sequence belongs to the thymidylate synthase family. Bacterial-type ThyA subfamily. In terms of assembly, homodimer.

Its subcellular location is the cytoplasm. The enzyme catalyses dUMP + (6R)-5,10-methylene-5,6,7,8-tetrahydrofolate = 7,8-dihydrofolate + dTMP. It participates in pyrimidine metabolism; dTTP biosynthesis. Catalyzes the reductive methylation of 2'-deoxyuridine-5'-monophosphate (dUMP) to 2'-deoxythymidine-5'-monophosphate (dTMP) while utilizing 5,10-methylenetetrahydrofolate (mTHF) as the methyl donor and reductant in the reaction, yielding dihydrofolate (DHF) as a by-product. This enzymatic reaction provides an intracellular de novo source of dTMP, an essential precursor for DNA biosynthesis. The protein is Thymidylate synthase of Shewanella putrefaciens (strain CN-32 / ATCC BAA-453).